A 232-amino-acid chain; its full sequence is Phosphoribosylformylglycinamidine synthase subunit PurQ (232 aa).

The 231-residue stretch at 2–232 (KIAILQFGGT…SMVDYITENF (231 aa)) folds into the Glutamine amidotransferase type-1 domain. The Nucleophile role is filled by Cys-86. Residues His-203 and Glu-205 contribute to the active site.

As to quaternary structure, part of the FGAM synthase complex composed of 1 PurL, 1 PurQ and 2 PurS subunits.

The protein localises to the cytoplasm. The catalysed reaction is N(2)-formyl-N(1)-(5-phospho-beta-D-ribosyl)glycinamide + L-glutamine + ATP + H2O = 2-formamido-N(1)-(5-O-phospho-beta-D-ribosyl)acetamidine + L-glutamate + ADP + phosphate + H(+). The enzyme catalyses L-glutamine + H2O = L-glutamate + NH4(+). Its pathway is purine metabolism; IMP biosynthesis via de novo pathway; 5-amino-1-(5-phospho-D-ribosyl)imidazole from N(2)-formyl-N(1)-(5-phospho-D-ribosyl)glycinamide: step 1/2. Its function is as follows. Part of the phosphoribosylformylglycinamidine synthase complex involved in the purines biosynthetic pathway. Catalyzes the ATP-dependent conversion of formylglycinamide ribonucleotide (FGAR) and glutamine to yield formylglycinamidine ribonucleotide (FGAM) and glutamate. The FGAM synthase complex is composed of three subunits. PurQ produces an ammonia molecule by converting glutamine to glutamate. PurL transfers the ammonia molecule to FGAR to form FGAM in an ATP-dependent manner. PurS interacts with PurQ and PurL and is thought to assist in the transfer of the ammonia molecule from PurQ to PurL. The chain is Phosphoribosylformylglycinamidine synthase subunit PurQ from Methanosarcina barkeri (strain Fusaro / DSM 804).